A 910-amino-acid chain; its full sequence is Coatomer subunit beta'-2 (910 aa).

9 WD repeats span residues 13 to 52, 55 to 94, 97 to 136, 140 to 180, 183 to 224, 227 to 266, 269 to 309, 351 to 393, and 461 to 501; these read QRSE…MVKS, VTEL…KVKV, AHTD…MCTQ, GHSH…PNFT, GHSK…CVQT, GHAH…LENT, YGLE…ASMD, TCDL…GSAL, and RIDV…SHLD. A disordered region spans residues 882 to 910; that stretch reads ADGSTDGAVLVNGNDTEEQWGTNNEESSA. Positions 900–910 are enriched in polar residues; the sequence is QWGTNNEESSA.

It belongs to the WD repeat COPB2 family. As to quaternary structure, oligomeric complex that consists of at least the alpha, beta, beta', gamma, delta, epsilon and zeta subunits.

It is found in the cytoplasm. The protein localises to the golgi apparatus membrane. Its subcellular location is the cytoplasmic vesicle. It localises to the COPI-coated vesicle membrane. Its function is as follows. The coatomer is a cytosolic protein complex that binds to dilysine motifs and reversibly associates with Golgi non-clathrin-coated vesicles, which further mediate biosynthetic protein transport from the ER, via the Golgi up to the trans Golgi network. Coatomer complex is required for budding from Golgi membranes, and is essential for the retrograde Golgi-to-ER transport of dilysine-tagged proteins. The protein is Coatomer subunit beta'-2 of Oryza sativa subsp. japonica (Rice).